Consider the following 213-residue polypeptide: Protein-L-isoaspartate O-methyltransferase (213 aa).

The active site involves S64.

The protein belongs to the methyltransferase superfamily. L-isoaspartyl/D-aspartyl protein methyltransferase family.

It localises to the cytoplasm. It catalyses the reaction [protein]-L-isoaspartate + S-adenosyl-L-methionine = [protein]-L-isoaspartate alpha-methyl ester + S-adenosyl-L-homocysteine. Functionally, catalyzes the methyl esterification of L-isoaspartyl residues in peptides and proteins that result from spontaneous decomposition of normal L-aspartyl and L-asparaginyl residues. It plays a role in the repair and/or degradation of damaged proteins. This Flavobacterium psychrophilum (strain ATCC 49511 / DSM 21280 / CIP 103535 / JIP02/86) protein is Protein-L-isoaspartate O-methyltransferase.